We begin with the raw amino-acid sequence, 357 residues long: MTKSYSESGLMGEPQPQGPPSWTDECLSSQDEEHEADKKEDELEAMNAEEDSLRNGGEEEDEDEDLEEEEEEEEEEDDQKPKRRGPKKKKMTKARLERFKLRRMKANARERNRMHGLNAALDNLRKVVPCYSKTQKLSKIETLRLAKNYIWALSEILRSGKSPDLVSFVQTLCKGLSQPTTNLVAGCLQLNPRTFLPEQNPDMPPHLPTASASFPVHPYSYQSPGLPSPPYGTMDSSHVFHVKPPPHAYSAALEPFFESPLTDCTSPSFDGPLSPPLSINGNFSFKHEPSTEFEKNYAFTMHYPAATLAGPQSHGSIFSSGAAAPRCEIPIDNIMSFDSHSHHERVMSAQLNAIFHD.

Residues 1 to 94 (MTKSYSESGL…GPKKKKMTKA (94 aa)) form a disordered region. Acidic residues predominate over residues 58–78 (EEEDEDEDLEEEEEEEEEEDD). Basic residues predominate over residues 81-93 (PKRRGPKKKKMTK). The Nuclear localization signal signature appears at 87–93 (KKKKMTK). Residues 101–153 (LRRMKANARERNRMHGLNAALDNLRKVVPCYSKTQKLSKIETLRLAKNYIWAL) form the bHLH domain. Phosphoserine occurs at positions 162, 259, 266, and 274. Serine 336 is modified (phosphoserine; by CaMK2).

Efficient DNA-binding requires dimerization with another bHLH protein. Heterodimer with TCF3/E47; the heterodimer is inhibited in presence of ID2, but not NR0B2, to E-box element. Interacts with EP300; the interaction is inhibited by NR0B2. Interacts with RREB1. Interacts with ATOH8. In terms of processing, phosphorylated by MAPK1; phosphorylation regulates heterodimerization and DNA-binding activities. Phosphorylation on Ser-266 and Ser-274 increases transactivation on the insulin promoter in glucose-stimulated insulinoma cells. Phosphorylated. In islet cells, phosphorylated on Ser-274 upon glucose stimulation; which may be required for nuclear localization. In activated neurons, phosphorylated on Ser-336 by CaMK2; which promotes dendritic growth.

Its subcellular location is the cytoplasm. The protein localises to the nucleus. In terms of biological role, acts as a transcriptional activator: mediates transcriptional activation by binding to E box-containing promoter consensus core sequences 5'-CANNTG-3'. Associates with the p300/CBP transcription coactivator complex to stimulate transcription of the secretin gene as well as the gene encoding the cyclin-dependent kinase inhibitor CDKN1A. Contributes to the regulation of several cell differentiation pathways, like those that promote the formation of early retinal ganglion cells, inner ear sensory neurons, granule cells forming either the cerebellum or the dentate gyrus cell layer of the hippocampus, endocrine islet cells of the pancreas and enteroendocrine cells of the small intestine. Together with PAX6 or SIX3, is required for the regulation of amacrine cell fate specification. Also required for dendrite morphogenesis and maintenance in the cerebellar cortex. Associates with chromatin to enhancer regulatory elements in genes encoding key transcriptional regulators of neurogenesis. In Rattus norvegicus (Rat), this protein is Neurogenic differentiation factor 1 (Neurod1).